A 742-amino-acid polypeptide reads, in one-letter code: Phosphoribosylformylglycinamidine synthase subunit PurL (742 aa).

His54 is an active-site residue. ATP is bound by residues Tyr57 and Lys96. A Mg(2+)-binding site is contributed by Glu98. Residues Ser99–His102 and Arg121 contribute to the substrate site. His100 functions as the Proton acceptor in the catalytic mechanism. Asp122 contacts Mg(2+). Substrate-binding residues include Gly225 and Gln245. Asp273 contributes to the Mg(2+) binding site. Glu317–Gln319 contacts substrate. Gly537 provides a ligand contact to ATP. Asn538 contributes to the Mg(2+) binding site. Ser540 is a binding site for substrate.

The protein belongs to the FGAMS family. In terms of assembly, monomer. Part of the FGAM synthase complex composed of 1 PurL, 1 PurQ and 2 PurS subunits.

The protein resides in the cytoplasm. The enzyme catalyses N(2)-formyl-N(1)-(5-phospho-beta-D-ribosyl)glycinamide + L-glutamine + ATP + H2O = 2-formamido-N(1)-(5-O-phospho-beta-D-ribosyl)acetamidine + L-glutamate + ADP + phosphate + H(+). It carries out the reaction L-glutamine + H2O = L-glutamate + NH4(+). It functions in the pathway purine metabolism; IMP biosynthesis via de novo pathway; 5-amino-1-(5-phospho-D-ribosyl)imidazole from N(2)-formyl-N(1)-(5-phospho-D-ribosyl)glycinamide: step 1/2. Its function is as follows. Part of the phosphoribosylformylglycinamidine synthase complex involved in the purines biosynthetic pathway. Catalyzes the ATP-dependent conversion of formylglycinamide ribonucleotide (FGAR) and glutamine to yield formylglycinamidine ribonucleotide (FGAM) and glutamate. The FGAM synthase complex is composed of three subunits. PurQ produces an ammonia molecule by converting glutamine to glutamate. PurL transfers the ammonia molecule to FGAR to form FGAM in an ATP-dependent manner. PurS interacts with PurQ and PurL and is thought to assist in the transfer of the ammonia molecule from PurQ to PurL. This Bacillus subtilis (strain 168) protein is Phosphoribosylformylglycinamidine synthase subunit PurL.